Reading from the N-terminus, the 173-residue chain is Transcriptional repressor NrdR (173 aa).

A zinc finger lies at 3-34 (CPYCGSLDTQVKDSRPTEDNTAIRRRRVCPDC). Positions 49–139 (LMVVKRSGRR…VYRNFREARD (91 aa)) constitute an ATP-cone domain.

It belongs to the NrdR family. It depends on Zn(2+) as a cofactor.

Functionally, negatively regulates transcription of bacterial ribonucleotide reductase nrd genes and operons by binding to NrdR-boxes. The polypeptide is Transcriptional repressor NrdR (Azorhizobium caulinodans (strain ATCC 43989 / DSM 5975 / JCM 20966 / LMG 6465 / NBRC 14845 / NCIMB 13405 / ORS 571)).